We begin with the raw amino-acid sequence, 380 residues long: Glutamate 5-kinase (380 aa).

ATP is bound at residue Lys-20. Residues Ser-59, Asp-146, and Asn-158 each coordinate substrate. Position 220-226 (220-226) interacts with ATP; it reads TGGMYSK. A PUA domain is found at 285–363; sequence SGTVTVDEGA…HEVAAILGDA (79 aa).

The protein belongs to the glutamate 5-kinase family.

The protein localises to the cytoplasm. It carries out the reaction L-glutamate + ATP = L-glutamyl 5-phosphate + ADP. It participates in amino-acid biosynthesis; L-proline biosynthesis; L-glutamate 5-semialdehyde from L-glutamate: step 1/2. Catalyzes the transfer of a phosphate group to glutamate to form L-glutamate 5-phosphate. In Nitratidesulfovibrio vulgaris (strain ATCC 29579 / DSM 644 / CCUG 34227 / NCIMB 8303 / VKM B-1760 / Hildenborough) (Desulfovibrio vulgaris), this protein is Glutamate 5-kinase.